We begin with the raw amino-acid sequence, 326 residues long: Polycomb complex protein BMI-1-A (326 aa).

An RING-type zinc finger spans residues 18–57 (CVLCGGYFIDATTIIECLHSFCKTCIVRYLETSKYCPICD). Positions 81–95 (KLVPGLFKGEMKRRR) match the Nuclear localization signal motif. Disordered stretches follow at residues 239-262 (NPHT…DKAG) and 274-326 (CIPS…ISSG). Residues 290–303 (ISSTINGTSSSSSS) show a composition bias toward low complexity.

As to quaternary structure, component of a PRC1-like complex. Interacts with cbx4.

Its subcellular location is the nucleus. Component of a Polycomb group (PcG) multiprotein PRC1-like complex, a complex class required to maintain the transcriptionally repressive state of many genes, including Hox genes, throughout development. PcG PRC1 complex acts via chromatin remodeling and modification of histones; it mediates monoubiquitination of histone H2A 'Lys-119', rendering chromatin heritably changed in its expressibility. In the PRC1 complex, it is required to stimulate the E3 ubiquitin-protein ligase activity of rnf2. The sequence is that of Polycomb complex protein BMI-1-A (bmi1a) from Xenopus laevis (African clawed frog).